The sequence spans 395 residues: Probable FMNH2-dependent monooxygenase SfnC (395 aa).

In terms of biological role, involved in the dimethyl sulfide degradation pathway. The protein is Probable FMNH2-dependent monooxygenase SfnC of Pseudomonas putida (Arthrobacter siderocapsulatus).